The following is a 110-amino-acid chain: Phosphoribosyl-ATP pyrophosphatase (110 aa).

Belongs to the PRA-PH family.

The protein resides in the cytoplasm. It catalyses the reaction 1-(5-phospho-beta-D-ribosyl)-ATP + H2O = 1-(5-phospho-beta-D-ribosyl)-5'-AMP + diphosphate + H(+). Its pathway is amino-acid biosynthesis; L-histidine biosynthesis; L-histidine from 5-phospho-alpha-D-ribose 1-diphosphate: step 2/9. The chain is Phosphoribosyl-ATP pyrophosphatase from Clostridium novyi (strain NT).